The following is a 168-amino-acid chain: Ribonuclease H (168 aa).

The RNase H type-1 domain maps to 10–151 (NNIPVKIYTD…ADKLATNGKI (142 aa)). Mg(2+) contacts are provided by Asp-19, Glu-57, Asp-79, and Asp-143.

Belongs to the RNase H family. Monomer. It depends on Mg(2+) as a cofactor.

The protein resides in the cytoplasm. It catalyses the reaction Endonucleolytic cleavage to 5'-phosphomonoester.. Functionally, endonuclease that specifically degrades the RNA of RNA-DNA hybrids. This chain is Ribonuclease H, found in Orientia tsutsugamushi (strain Boryong) (Rickettsia tsutsugamushi).